We begin with the raw amino-acid sequence, 394 residues long: Probable pectate lyase 16 (394 aa).

A signal peptide spans 1–22; the sequence is MTLFTVSCLLVVLFLCHSLVHA. Ca(2+)-binding residues include D192, D216, and D220. Residue R272 is part of the active site.

This sequence belongs to the polysaccharide lyase 1 family. The cofactor is Ca(2+).

It carries out the reaction Eliminative cleavage of (1-&gt;4)-alpha-D-galacturonan to give oligosaccharides with 4-deoxy-alpha-D-galact-4-enuronosyl groups at their non-reducing ends.. The protein operates within glycan metabolism; pectin degradation; 2-dehydro-3-deoxy-D-gluconate from pectin: step 2/5. The sequence is that of Probable pectate lyase 16 from Arabidopsis thaliana (Mouse-ear cress).